Here is a 232-residue protein sequence, read N- to C-terminus: Ion-translocating oxidoreductase complex subunit E (232 aa).

Transmembrane regions (helical) follow at residues 18–38, 39–59, 69–89, 93–113, 128–148, and 182–202; these read ALVQLLGLCPLLAVTATVTNG, LGLGLATTLVLIGSNATVSII, IPIFVMIIAAFVTVVQLLMNA, ELYQALGIFIPLIVTNCAIIG, AFDGLMMGLGFTVVLVLLGAM, and PFLLAILPPGAFLGMGLLIAA.

This sequence belongs to the NqrDE/RnfAE family. The complex is composed of six subunits: RnfA, RnfB, RnfC, RnfD, RnfE and RnfG.

Its subcellular location is the cell inner membrane. Part of a membrane-bound complex that couples electron transfer with translocation of ions across the membrane. This is Ion-translocating oxidoreductase complex subunit E from Pseudoalteromonas atlantica (strain T6c / ATCC BAA-1087).